We begin with the raw amino-acid sequence, 429 residues long: Enolase (429 aa).

Gln-163 is a binding site for (2R)-2-phosphoglycerate. Glu-205 (proton donor) is an active-site residue. 3 residues coordinate Mg(2+): Asp-242, Glu-286, and Asp-313. 4 residues coordinate (2R)-2-phosphoglycerate: Lys-338, Arg-367, Ser-368, and Lys-389. Catalysis depends on Lys-338, which acts as the Proton acceptor.

It belongs to the enolase family. Mg(2+) is required as a cofactor.

The protein resides in the cytoplasm. The protein localises to the secreted. It is found in the cell surface. The enzyme catalyses (2R)-2-phosphoglycerate = phosphoenolpyruvate + H2O. It functions in the pathway carbohydrate degradation; glycolysis; pyruvate from D-glyceraldehyde 3-phosphate: step 4/5. Catalyzes the reversible conversion of 2-phosphoglycerate (2-PG) into phosphoenolpyruvate (PEP). It is essential for the degradation of carbohydrates via glycolysis. The polypeptide is Enolase (Geotalea uraniireducens (strain Rf4) (Geobacter uraniireducens)).